Here is a 347-residue protein sequence, read N- to C-terminus: Holliday junction branch migration complex subunit RuvB (347 aa).

The segment at 1 to 183 (MTPPSRIVTP…FGIPIRLNFY (183 aa)) is large ATPase domain (RuvB-L). ATP is bound by residues leucine 22, arginine 23, glycine 64, lysine 67, threonine 68, threonine 69, 130–132 (EDF), arginine 173, tyrosine 183, and arginine 220. Position 68 (threonine 68) interacts with Mg(2+). The small ATPAse domain (RuvB-S) stretch occupies residues 184-254 (TVEELEGIVS…IADHALSALE (71 aa)). The head domain (RuvB-H) stretch occupies residues 257–347 (AAGLDAMDRR…QFGLFGGDEE (91 aa)). Arginine 293, arginine 312, and arginine 317 together coordinate DNA.

It belongs to the RuvB family. Homohexamer. Forms an RuvA(8)-RuvB(12)-Holliday junction (HJ) complex. HJ DNA is sandwiched between 2 RuvA tetramers; dsDNA enters through RuvA and exits via RuvB. An RuvB hexamer assembles on each DNA strand where it exits the tetramer. Each RuvB hexamer is contacted by two RuvA subunits (via domain III) on 2 adjacent RuvB subunits; this complex drives branch migration. In the full resolvosome a probable DNA-RuvA(4)-RuvB(12)-RuvC(2) complex forms which resolves the HJ.

It is found in the cytoplasm. It catalyses the reaction ATP + H2O = ADP + phosphate + H(+). Its function is as follows. The RuvA-RuvB-RuvC complex processes Holliday junction (HJ) DNA during genetic recombination and DNA repair, while the RuvA-RuvB complex plays an important role in the rescue of blocked DNA replication forks via replication fork reversal (RFR). RuvA specifically binds to HJ cruciform DNA, conferring on it an open structure. The RuvB hexamer acts as an ATP-dependent pump, pulling dsDNA into and through the RuvAB complex. RuvB forms 2 homohexamers on either side of HJ DNA bound by 1 or 2 RuvA tetramers; 4 subunits per hexamer contact DNA at a time. Coordinated motions by a converter formed by DNA-disengaged RuvB subunits stimulates ATP hydrolysis and nucleotide exchange. Immobilization of the converter enables RuvB to convert the ATP-contained energy into a lever motion, pulling 2 nucleotides of DNA out of the RuvA tetramer per ATP hydrolyzed, thus driving DNA branch migration. The RuvB motors rotate together with the DNA substrate, which together with the progressing nucleotide cycle form the mechanistic basis for DNA recombination by continuous HJ branch migration. Branch migration allows RuvC to scan DNA until it finds its consensus sequence, where it cleaves and resolves cruciform DNA. This is Holliday junction branch migration complex subunit RuvB from Rhodopseudomonas palustris (strain BisA53).